The chain runs to 350 residues: 3-methylornithine synthase (350 aa).

The region spanning 57–279 (NRVFLNCFIY…PKRLIPASLD (223 aa)) is the Radical SAM core domain. [4Fe-4S] cluster-binding residues include Cys71 and Cys75. Phe77 contributes to the S-adenosyl-L-methionine binding site. Position 78 (Cys78) interacts with [4Fe-4S] cluster. Residues Asp112, Ser146, and Tyr169 each contribute to the (3R)-3-methyl-D-ornithine site. S-adenosyl-L-methionine is bound by residues Glu171, Arg182, and Arg190. Arg235 contributes to the (3R)-3-methyl-D-ornithine binding site. Residues Leu240 and Gln242 each coordinate S-adenosyl-L-methionine. Residues Ser277, Thr298, and Ser299 each contribute to the (3R)-3-methyl-D-ornithine site.

This sequence belongs to the radical SAM superfamily. PylB family. It depends on [4Fe-4S] cluster as a cofactor. S-adenosyl-L-methionine serves as cofactor.

The catalysed reaction is L-lysine = (3R)-3-methyl-D-ornithine. It functions in the pathway amino-acid biosynthesis; L-pyrrolysine biosynthesis. Its function is as follows. Catalyzes the isomerization of L-lysine to (3R)-3-methyl-D-ornithine via a radical-based mechanism, a step in the biosynthesis pathway of pyrrolysine. Also catalyzes the reverse reaction in vitro, converting (3R)-3-methyl-D-ornithine into L-lysine. In Methanosarcina barkeri (strain Fusaro / DSM 804), this protein is 3-methylornithine synthase.